A 110-amino-acid polypeptide reads, in one-letter code: Large ribosomal subunit protein uL22 (110 aa).

It belongs to the universal ribosomal protein uL22 family. As to quaternary structure, part of the 50S ribosomal subunit.

This protein binds specifically to 23S rRNA; its binding is stimulated by other ribosomal proteins, e.g. L4, L17, and L20. It is important during the early stages of 50S assembly. It makes multiple contacts with different domains of the 23S rRNA in the assembled 50S subunit and ribosome. Its function is as follows. The globular domain of the protein is located near the polypeptide exit tunnel on the outside of the subunit, while an extended beta-hairpin is found that lines the wall of the exit tunnel in the center of the 70S ribosome. This Leptospira borgpetersenii serovar Hardjo-bovis (strain JB197) protein is Large ribosomal subunit protein uL22.